The sequence spans 1316 residues: Myosin-5 (1316 aa).

Residues Met-1–Thr-12 are compositionally biased toward basic residues. Residues Met-1 to Gly-29 form a disordered region. The Myosin motor domain maps to Val-43 to Asp-731. Gly-136 to Thr-143 provides a ligand contact to ATP. Phosphoserine is present on Ser-366. The tract at residues Ser-414 to Ser-497 is actin-binding. IQ domains lie at His-735–Ala-755 and Ala-756–Gly-781. The region spanning Arg-789–Ala-981 is the TH1 domain. Disordered stretches follow at residues Asn-964–Val-1154 and Asp-1209–Trp-1316. 2 stretches are compositionally biased toward polar residues: residues Gly-971–Lys-984 and Pro-1018–Gly-1030. The segment covering Gln-1042 to Ser-1065 has biased composition (low complexity). Residues Ser-1097–Ala-1106 are compositionally biased toward polar residues. The span at Ala-1117–Ser-1129 shows a compositional bias: low complexity. Pro residues predominate over residues Pro-1137–Leu-1153. The region spanning Pro-1156–Pro-1216 is the SH3 domain. Pro residues predominate over residues Ala-1223 to Ala-1232. The segment covering Ala-1233–Ser-1268 has biased composition (low complexity). Acidic residues predominate over residues Ser-1305–Trp-1316.

Belongs to the TRAFAC class myosin-kinesin ATPase superfamily. Myosin family. In terms of processing, phosphorylation of the TEDS site (Ser-366) is required for the polarization of the actin cytoskeleton. Phosphorylation probably activates the myosin-I ATPase activity.

The protein localises to the cytoplasm. It is found in the cytoskeleton. The protein resides in the actin patch. Functionally, type-I myosin implicated in the organization of the actin cytoskeleton. Required for proper actin cytoskeleton polarization and for the internalization step in endocytosis. At the cell cortex, assembles in patch-like structures together with proteins from the actin-polymerizing machinery and promotes actin assembly. Functions as actin nucleation-promoting factor (NPF) for the Arp2/3 complex. Plays a role in chitin deposition in the cell wall, in determination of the budding pattern, and is required for hyphae formation. This Candida albicans (strain SC5314 / ATCC MYA-2876) (Yeast) protein is Myosin-5 (MYO5).